Here is a 133-residue protein sequence, read N- to C-terminus: Small ribosomal subunit protein uS9 (133 aa).

Residues 94–133 form a disordered region; that stretch reads SADNRKPLKTEGHLSRDPRAKERRKYGLKKARKAPQFSKR. A compositionally biased stretch (basic and acidic residues) spans 95 to 113; that stretch reads ADNRKPLKTEGHLSRDPRA. Residues 114–133 show a composition bias toward basic residues; that stretch reads KERRKYGLKKARKAPQFSKR.

It belongs to the universal ribosomal protein uS9 family.

The sequence is that of Small ribosomal subunit protein uS9 from Synechococcus sp. (strain CC9605).